The sequence spans 232 residues: 7-cyano-7-deazaguanine synthase (232 aa).

8–18 (FSGGQDSTTCL) provides a ligand contact to ATP. Residues Cys189, Cys198, Cys201, and Cys204 each contribute to the Zn(2+) site.

Belongs to the QueC family. Zn(2+) serves as cofactor.

The catalysed reaction is 7-carboxy-7-deazaguanine + NH4(+) + ATP = 7-cyano-7-deazaguanine + ADP + phosphate + H2O + H(+). It participates in purine metabolism; 7-cyano-7-deazaguanine biosynthesis. Its function is as follows. Catalyzes the ATP-dependent conversion of 7-carboxy-7-deazaguanine (CDG) to 7-cyano-7-deazaguanine (preQ(0)). In Photorhabdus laumondii subsp. laumondii (strain DSM 15139 / CIP 105565 / TT01) (Photorhabdus luminescens subsp. laumondii), this protein is 7-cyano-7-deazaguanine synthase.